Reading from the N-terminus, the 316-residue chain is N-acetylmuramic acid 6-phosphate etherase (316 aa).

The segment at 1–25 is disordered; it reads MAVFDPDLQPSSDRGHLLTEQSNQR. Residues 66–229 enclose the SIS domain; the sequence is VANRLRAGGR…STAVMVKLGK (164 aa). Glutamate 94 serves as the catalytic Proton donor. Residue glutamate 125 is part of the active site.

It belongs to the GCKR-like family. MurNAc-6-P etherase subfamily. Homodimer.

The catalysed reaction is N-acetyl-D-muramate 6-phosphate + H2O = N-acetyl-D-glucosamine 6-phosphate + (R)-lactate. Its pathway is amino-sugar metabolism; N-acetylmuramate degradation. Specifically catalyzes the cleavage of the D-lactyl ether substituent of MurNAc 6-phosphate, producing GlcNAc 6-phosphate and D-lactate. The protein is N-acetylmuramic acid 6-phosphate etherase of Synechococcus sp. (strain CC9605).